The following is a 599-amino-acid chain: MSKSLSWDTLDYTLQPWIRTAVDAMGYETMTPVQASTIPLFARNKDVVVESVTGSGKTVAFVIPVLERVIQDDANSSKLKKGHFHTIIISPTRELASQIQGVIEAFLTYYPDGEYPIKSQLLIGSNTSSVRDDVAAFLEHRPQILVGTPGRLLDFLKMPNIKTSSCGAAILDEADKLLDMNFEKDVETILKMLPKQRRTGLFSATVSSAGTQVFKTGMRNPVKVSVKTSNKAPSSLDINYIVIEPRMKLQLLLTLLNNYRYKKCIVYLPTCIAVTYFYSILQHLAKLNKMDENLKLYSLHGKLLTNSRMKTLDRFTQELGKAVLLTTDVAARGIDIPDIDLVLQMDPPIDADIFLHRCGRAGRANRAGRAIVFLNQGREEDYIPFLQVKNVEAKELDTVAIKPIEGLPEIIRAWILEDRARFDHSLKVYVAFLRYYSKHTASSIFRLQTLDYIGIAEMHGLIRLPGTPEIQRYLSKDAIPEDGWLVSPPIDLDSFAYADPQREKARKLAKKEAKDVKDNNKLKSEMRKNNEAWSKKTVTKENKLQRKEKMALKRKAIEEKLIENSDDSDNEVETDWKDIVRQRKKKKTNSGMQGDFGDL.

A Q motif motif is present at residues 7–35 (WDTLDYTLQPWIRTAVDAMGYETMTPVQA). The 187-residue stretch at 38–224 (IPLFARNKDV…KTGMRNPVKV (187 aa)) folds into the Helicase ATP-binding domain. Residue 51-58 (SVTGSGKT) coordinates ATP. The DEAD box signature appears at 172–175 (DEAD). A Helicase C-terminal domain is found at 248–415 (KLQLLLTLLN…GLPEIIRAWI (168 aa)). Residues 501-561 (QREKARKLAK…LKRKAIEEKL (61 aa)) adopt a coiled-coil conformation. The disordered stretch occupies residues 559 to 599 (EKLIENSDDSDNEVETDWKDIVRQRKKKKTNSGMQGDFGDL). Residues 564-573 (NSDDSDNEVE) show a composition bias toward acidic residues.

Belongs to the DEAD box helicase family. DDX55/SPB4 subfamily. Component of pre-60S ribosomal complexes.

It is found in the nucleus. The protein resides in the nucleolus. The enzyme catalyses ATP + H2O = ADP + phosphate + H(+). Its function is as follows. ATP-binding RNA helicase involved in the biogenesis of 60S ribosomal subunits. Binds 90S pre-ribosomal particles and dissociates from pre-60S ribosomal particles after processing of 27SB pre-rRNA. Required for the normal formation of 18S rRNA through the processing of pre-rRNAs at sites A0, A1 and A2, and the normal formation of 25S and 5.8S rRNAs through the processing of pre-rRNAs at sites C1 and C2. This is ATP-dependent rRNA helicase SPB4 from Eremothecium gossypii (strain ATCC 10895 / CBS 109.51 / FGSC 9923 / NRRL Y-1056) (Yeast).